The primary structure comprises 292 residues: uncharacterized protein (292 aa).

Positions 1–58 (MEWEQLEYFQTLARMQHVTKAAKSLSITQPALSRSIARLENHLGVPLFDRQGRSISLN) constitute an HTH lysR-type domain. Residues 18–37 (VTKAAKSLSITQPALSRSIA) constitute a DNA-binding region (H-T-H motif).

The protein belongs to the LysR transcriptional regulatory family.

This is an uncharacterized protein from Bacillus subtilis (strain 168).